We begin with the raw amino-acid sequence, 312 residues long: Putative S-adenosyl-L-methionine-dependent methyltransferase BCG_1768c (312 aa).

S-adenosyl-L-methionine-binding positions include Asp-130 and 159 to 160; that span reads DL.

Belongs to the UPF0677 family.

Its function is as follows. Exhibits S-adenosyl-L-methionine-dependent methyltransferase activity. The protein is Putative S-adenosyl-L-methionine-dependent methyltransferase BCG_1768c of Mycobacterium bovis (strain BCG / Pasteur 1173P2).